Here is a 346-residue protein sequence, read N- to C-terminus: Sensor histidine kinase GraS (346 aa).

The next 2 helical transmembrane spans lie at 15-35 (MNWI…SLID) and 43-63 (LFYI…LTYF). The Histidine kinase domain occupies 126–332 (EFVHDIKTPV…TVRLIFPLQN (207 aa)).

In terms of assembly, interacts with GraX.

The protein resides in the cell membrane. The enzyme catalyses ATP + protein L-histidine = ADP + protein N-phospho-L-histidine.. In terms of biological role, member of the two-component regulatory system GraR/GraS involved in resistance against cationic antimicrobial peptides (CAMPs). Functions as a sensor protein kinase which phosphorylates GraR through the auxiliary protein GraX. In turn, GraR up-regulates many genes such as adhesins, exoproteins, transporters, toxins, and proteins involved in cell wall synthesis. Down-regulates the expression of many genes involved in RNA and amino acid synthesis or glycolysis. The protein is Sensor histidine kinase GraS (graS) of Staphylococcus aureus (strain Mu50 / ATCC 700699).